The sequence spans 484 residues: tRNA-2-methylthio-N(6)-dimethylallyladenosine synthase (484 aa).

The MTTase N-terminal domain maps to 36–153 (GKLYIKTHGC…LPELIRARRE (118 aa)). 6 residues coordinate [4Fe-4S] cluster: Cys45, Cys82, Cys116, Cys190, Cys194, and Cys197. Residues 176–415 (RAEGPSAFVS…HISAHAASIS (240 aa)) form the Radical SAM core domain. Residues 416-479 (QSMVGSVQRV…SNSLRGRIQL (64 aa)) enclose the TRAM domain. The segment at 428–450 (EGPSRRDPNELTGKSENMRPVNF) is disordered.

The protein belongs to the methylthiotransferase family. MiaB subfamily. In terms of assembly, monomer. The cofactor is [4Fe-4S] cluster.

The protein resides in the cytoplasm. It carries out the reaction N(6)-dimethylallyladenosine(37) in tRNA + (sulfur carrier)-SH + AH2 + 2 S-adenosyl-L-methionine = 2-methylsulfanyl-N(6)-dimethylallyladenosine(37) in tRNA + (sulfur carrier)-H + 5'-deoxyadenosine + L-methionine + A + S-adenosyl-L-homocysteine + 2 H(+). Functionally, catalyzes the methylthiolation of N6-(dimethylallyl)adenosine (i(6)A), leading to the formation of 2-methylthio-N6-(dimethylallyl)adenosine (ms(2)i(6)A) at position 37 in tRNAs that read codons beginning with uridine. In Xanthomonas oryzae pv. oryzae (strain PXO99A), this protein is tRNA-2-methylthio-N(6)-dimethylallyladenosine synthase.